The following is a 288-amino-acid chain: 33 kDa chaperonin (288 aa).

2 disulfide bridges follow: C233/C235 and C267/C270.

It belongs to the HSP33 family. Under oxidizing conditions two disulfide bonds are formed involving the reactive cysteines. Under reducing conditions zinc is bound to the reactive cysteines and the protein is inactive.

It is found in the cytoplasm. Functionally, redox regulated molecular chaperone. Protects both thermally unfolding and oxidatively damaged proteins from irreversible aggregation. Plays an important role in the bacterial defense system toward oxidative stress. The sequence is that of 33 kDa chaperonin from Pasteurella multocida (strain Pm70).